Reading from the N-terminus, the 203-residue chain is Small ribosomal subunit protein uS4 (203 aa).

The 64-residue stretch at 93–156 folds into the S4 RNA-binding domain; that stretch reads RRLDNVVYRL…MKVPAILEAV (64 aa).

It belongs to the universal ribosomal protein uS4 family. In terms of assembly, part of the 30S ribosomal subunit. Contacts protein S5. The interaction surface between S4 and S5 is involved in control of translational fidelity.

Functionally, one of the primary rRNA binding proteins, it binds directly to 16S rRNA where it nucleates assembly of the body of the 30S subunit. Its function is as follows. With S5 and S12 plays an important role in translational accuracy. In Streptococcus pyogenes serotype M1, this protein is Small ribosomal subunit protein uS4.